A 159-amino-acid polypeptide reads, in one-letter code: Heavy metal-associated isoprenylated plant protein 28 (159 aa).

The 64-residue stretch at 10–73 (LQTIEMRVHM…KVRKTGRRAE (64 aa)) folds into the HMA domain. Residues Cys21 and Cys24 each coordinate a metal cation. Position 156 is a cysteine methyl ester (Cys156). The S-farnesyl cysteine moiety is linked to residue Cys156. Positions 157–159 (SIM) are cleaved as a propeptide — removed in mature form.

Belongs to the HIPP family.

In terms of biological role, heavy-metal-binding protein. The polypeptide is Heavy metal-associated isoprenylated plant protein 28 (Arabidopsis thaliana (Mouse-ear cress)).